The sequence spans 121 residues: Small ribosomal subunit protein uS11 (121 aa).

It belongs to the universal ribosomal protein uS11 family. Part of the 30S ribosomal subunit. Interacts with proteins S7 and S18. Binds to IF-3.

In terms of biological role, located on the platform of the 30S subunit, it bridges several disparate RNA helices of the 16S rRNA. Forms part of the Shine-Dalgarno cleft in the 70S ribosome. The sequence is that of Small ribosomal subunit protein uS11 from Mycoplasmoides gallisepticum (strain R(low / passage 15 / clone 2)) (Mycoplasma gallisepticum).